The chain runs to 717 residues: Polyribonucleotide nucleotidyltransferase (717 aa).

Residues aspartate 486 and aspartate 492 each contribute to the Mg(2+) site. Residues 553–612 (PKIVQLQIDIDKISLVIGSTGKTVKAITDEFEVRVQIEQDGRITLFGTDSLKMQKAKAKI) form the KH domain. The region spanning 622 to 715 (GEIYDGIVKK…KFGKIELELV (94 aa)) is the S1 motif domain. The tract at residues 659–689 (RYGDMRHSRYGSGRHSRYGRDNRNTFGMNPP) is disordered. Residues 666–675 (SRYGSGRHSR) show a composition bias toward basic residues.

The protein belongs to the polyribonucleotide nucleotidyltransferase family. Requires Mg(2+) as cofactor.

It localises to the cytoplasm. It catalyses the reaction RNA(n+1) + phosphate = RNA(n) + a ribonucleoside 5'-diphosphate. Its function is as follows. Involved in mRNA degradation. Catalyzes the phosphorolysis of single-stranded polyribonucleotides processively in the 3'- to 5'-direction. The protein is Polyribonucleotide nucleotidyltransferase of Borrelia hermsii (strain HS1 / DAH).